Here is a 356-residue protein sequence, read N- to C-terminus: Tyrosine recombinase XerS (356 aa).

The 106-residue stretch at 16 to 121 folds into the Core-binding (CB) domain; the sequence is LMPWFVLEYY…ALSCLYKYLT (106 aa). A Tyr recombinase domain is found at 169–354; it reads KFLDYVENEY…VNDEQKNALD (186 aa). Active-site residues include Arg210, Lys234, His306, Arg309, and His332. Tyr341 acts as the O-(3'-phospho-DNA)-tyrosine intermediate in catalysis.

Belongs to the 'phage' integrase family. XerS subfamily.

It localises to the cytoplasm. Its activity is regulated as follows. FtsK is required for recombination. In terms of biological role, site-specific tyrosine recombinase, which acts by catalyzing the cutting and rejoining of the recombining DNA molecules. Essential to convert dimers of the bacterial chromosome into monomers to permit their segregation at cell division. The sequence is that of Tyrosine recombinase XerS from Streptococcus thermophilus (strain ATCC BAA-250 / LMG 18311).